Here is a 200-residue protein sequence, read N- to C-terminus: Dephospho-CoA kinase (200 aa).

One can recognise a DPCK domain in the interval Val-4–Asp-200. Ala-12–Thr-17 contacts ATP.

It belongs to the CoaE family.

It is found in the cytoplasm. The catalysed reaction is 3'-dephospho-CoA + ATP = ADP + CoA + H(+). Its pathway is cofactor biosynthesis; coenzyme A biosynthesis; CoA from (R)-pantothenate: step 5/5. Functionally, catalyzes the phosphorylation of the 3'-hydroxyl group of dephosphocoenzyme A to form coenzyme A. This is Dephospho-CoA kinase from Bacillus cereus (strain ATCC 14579 / DSM 31 / CCUG 7414 / JCM 2152 / NBRC 15305 / NCIMB 9373 / NCTC 2599 / NRRL B-3711).